The primary structure comprises 155 residues: UPF0178 protein ACICU_02858 (155 aa).

The disordered stretch occupies residues 120 to 155; sequence GAGVQTGGPPPISERDKREFSSALDQTILKQKRKTA.

Belongs to the UPF0178 family.

The sequence is that of UPF0178 protein ACICU_02858 from Acinetobacter baumannii (strain ACICU).